A 398-amino-acid polypeptide reads, in one-letter code: Gastric triacylglycerol lipase (398 aa).

An N-terminal signal peptide occupies residues 1–19 (MWLLLTMASLISVLGTTHG). N-linked (GlcNAc...) asparagine glycans are attached at residues N34 and N99. Residues 78-377 (PVVFLQHGLL…PFYNHLDFIW (300 aa)) enclose the AB hydrolase-1 domain. S172 functions as the Nucleophile in the catalytic mechanism. A disulfide bridge links C246 with C255. 2 N-linked (GlcNAc...) asparagine glycosylation sites follow: N271 and N327. Active-site charge relay system residues include D343 and H372.

The protein belongs to the AB hydrolase superfamily. Lipase family.

The protein localises to the secreted. The enzyme catalyses a triacylglycerol + H2O = a diacylglycerol + a fatty acid + H(+). It catalyses the reaction 1,2,3-tri-(9Z-octadecenoyl)-glycerol + H2O = 1,2-di-(9Z-octadecenoyl)-sn-glycerol + (9Z)-octadecenoate + H(+). The catalysed reaction is 1,2,3-trioctanoylglycerol + H2O = 1,2-dioctanoyl-sn-glycerol + octanoate + H(+). Functionally, catalyzes the hydrolysis of triacylglycerols to yield free fatty acids, diacylglycerol, monoacylglycerol, and glycerol. Shows a preferential hydrolysis at the sn-3 position of triacylglycerol. In Homo sapiens (Human), this protein is Gastric triacylglycerol lipase (LIPF).